Consider the following 777-residue polypeptide: Transcriptional regulator QRICH1 (777 aa).

Met-1 carries the post-translational modification N-acetylmethionine. Positions 6–48 (ENTISFEEYIRVKARSVPQHRMKEFLDSLASKGPEALQEFQQT) constitute a CARD domain. Disordered regions lie at residues 140-164 (IQGQ…SPSQ) and 219-240 (ALSP…VGTA). Ser-346 carries the phosphoserine modification. Residues Lys-354 and Lys-359 each participate in a glycyl lysine isopeptide (Lys-Gly) (interchain with G-Cter in SUMO2) cross-link. Residues 420-440 (QQQPQQQTAQEQTPPPQQQQQ) form a disordered region. Ser-465 carries the phosphoserine modification.

As to expression, expressed highly in prefrontal cortex, craniofacial area and near the limbs of mouse embryos. Expressed in heart, skeletal muscle, liver, kidney, lung, brain, spleen, intestine and growth plate in mice.

It localises to the nucleus. The protein localises to the cytoplasm. Its subcellular location is the cell membrane. In terms of biological role, transcriptional regulator that acts as a mediator of the integrated stress response (ISR) through transcriptional control of protein homeostasis under conditions of ER stress. Controls the outcome of the unfolded protein response (UPR), an ER-stress response pathway that either promotes recovery of ER homeostasis and cell survival, or triggers the terminal UPR which elicits programmed cell death when ER stress is prolonged and unresolved. ER stress induces QRICH1 translation by a ribosome translation re-initiation mechanism in response to EIF2S1/eIF-2-alpha phosphorylation, and stress-induced QRICH1 regulates a transcriptional program associated with protein translation, protein secretion-mediated proteotoxicity and cell death during the terminal UPR. May cooperate with ATF4 transcription factor signaling to regulate ER homeostasis which is critical for cell viability. Up-regulates CASP3/caspase-3 activity in epithelial cells under ER stress. Central regulator of proteotoxicity associated with ER stress-mediated inflammatory diseases in the intestines and liver. Involved in chondrocyte hypertrophy, a process required for normal longitudinal bone growth. This Mus musculus (Mouse) protein is Transcriptional regulator QRICH1.